Consider the following 196-residue polypeptide: Holliday junction branch migration complex subunit RuvA (196 aa).

Residues 1–63 (MYDYIKGILT…EDAHLLYGFA (63 aa)) are domain I. Residues 64 to 142 (TENEKSVFLS…MSEEAGPVQQ (79 aa)) are domain II. The tract at residues 142–146 (QVAPS) is flexible linker. Positions 147–196 (SENIALEEAMEAMEALGYRPAELKKIKKFFEGTNDTAENYIKSALKMLMK) are domain III.

It belongs to the RuvA family. As to quaternary structure, homotetramer. Forms an RuvA(8)-RuvB(12)-Holliday junction (HJ) complex. HJ DNA is sandwiched between 2 RuvA tetramers; dsDNA enters through RuvA and exits via RuvB. An RuvB hexamer assembles on each DNA strand where it exits the tetramer. Each RuvB hexamer is contacted by two RuvA subunits (via domain III) on 2 adjacent RuvB subunits; this complex drives branch migration. In the full resolvosome a probable DNA-RuvA(4)-RuvB(12)-RuvC(2) complex forms which resolves the HJ.

The protein resides in the cytoplasm. Its function is as follows. The RuvA-RuvB-RuvC complex processes Holliday junction (HJ) DNA during genetic recombination and DNA repair, while the RuvA-RuvB complex plays an important role in the rescue of blocked DNA replication forks via replication fork reversal (RFR). RuvA specifically binds to HJ cruciform DNA, conferring on it an open structure. The RuvB hexamer acts as an ATP-dependent pump, pulling dsDNA into and through the RuvAB complex. HJ branch migration allows RuvC to scan DNA until it finds its consensus sequence, where it cleaves and resolves the cruciform DNA. The chain is Holliday junction branch migration complex subunit RuvA from Streptococcus suis (strain 98HAH33).